Consider the following 503-residue polypeptide: MSEAPVHQRKVAFIHPDLGIGGAERLVVDAAAGLQNAGYDVTIYTSHCDKSHCFEEVKNGTLKVEVRGDALPTHIFGKFSILCANLRQLYLTWNLISTGKIEEYDVYIVDQLSSCVPLLHLNAPDSKVLFYCHFPDQLLARRDGLLKKLYRIPFDILEQFTMGVADTILVNSNFTKQVFAKTFQSLAVDPKVVYPCVNVEQEEILPLDKDLMKKILKNNEKYYLSINRYERKKNIELAITAFAQSKQRTSHKLFISGGYDLNNSENIDYLKELETLATELKLKHVHLSYPEYSKSPDKCPSSNFADAQILFLTSVSSSLKELLLQSTEMLLYTPSNEHFGIVPLEAMKYGVPVLAVDTGGPLETVVDYNETPSHIDATGWLRPSDADEWSKVLDQSVDIFEKNHSLFEVNGPKRIKYYFSREAMSKNFDNTIDHIIWKSRGTRLWSTLAPGLLMFTVQYATLLITGDASWPYLLLAAISYFVLRSVKATVYWIIVFCYLNYST.

N59, N173, N262, and N403 each carry an N-linked (GlcNAc...) asparagine glycan. Transmembrane regions (helical) follow at residues 444-466 (LWSTLAPGLLMFTVQYATLLITG) and 473-495 (LLLAAISYFVLRSVKATVYWIIV). N-linked (GlcNAc...) asparagine glycosylation is present at N500.

This sequence belongs to the glycosyltransferase group 1 family.

Its subcellular location is the endoplasmic reticulum membrane. The enzyme catalyses a beta-D-Man-(1-&gt;4)-beta-D-GlcNAc-(1-&gt;4)-alpha-D-GlcNAc-diphospho-di-trans,poly-cis-dolichol + GDP-alpha-D-mannose = an alpha-D-Man-(1-&gt;3)-beta-D-Man-(1-&gt;4)-beta-D-GlcNAc-(1-&gt;4)-alpha-D-GlcNAc-diphospho-di-trans,poly-cis-dolichol + GDP + H(+). It catalyses the reaction an alpha-D-Man-(1-&gt;3)-beta-D-Man-(1-&gt;4)-beta-D-GlcNAc-(1-&gt;4)-alpha-D-GlcNAc-diphospho-di-trans,poly-cis-dolichol + GDP-alpha-D-mannose = an alpha-D-Man-(1-&gt;3)-[alpha-D-Man-(1-&gt;6)]-beta-D-Man-(1-&gt;4)-beta-D-GlcNAc-(1-&gt;4)-alpha-D-GlcNAc-diphospho-di-trans,poly-cis-dolichol + GDP + H(+). The protein operates within protein modification; protein glycosylation. Its function is as follows. Mannosylates Man(2)GlcNAc(2)-dolichol diphosphate and Man(1)GlcNAc(2)-dolichol diphosphate to form Man(3)GlcNAc(2)-dolichol diphosphate. The polypeptide is Alpha-1,3/1,6-mannosyltransferase ALG2 (ALG2) (Kluyveromyces lactis (strain ATCC 8585 / CBS 2359 / DSM 70799 / NBRC 1267 / NRRL Y-1140 / WM37) (Yeast)).